A 278-amino-acid polypeptide reads, in one-letter code: Nucleotide-binding protein Tlet_0523 (278 aa).

ATP is bound at residue Gly9–Ser16. Residue Asp58–Ser61 coordinates GTP.

Belongs to the RapZ-like family.

Its function is as follows. Displays ATPase and GTPase activities. The protein is Nucleotide-binding protein Tlet_0523 of Pseudothermotoga lettingae (strain ATCC BAA-301 / DSM 14385 / NBRC 107922 / TMO) (Thermotoga lettingae).